Reading from the N-terminus, the 364-residue chain is Capsular polysaccharide phosphotransferase cps1A (364 aa).

Belongs to the stealth family.

Its function is as follows. Part of a capsular polysaccharide synthesis locus. In Actinobacillus pleuropneumoniae (Haemophilus pleuropneumoniae), this protein is Capsular polysaccharide phosphotransferase cps1A (cps1A).